The following is a 259-amino-acid chain: BTB/POZ domain-containing protein KCTD4 (259 aa).

A BTB domain is found at 33 to 134; it reads TLMTLNVGGY…EVKSRWEKEQ (102 aa).

This chain is BTB/POZ domain-containing protein KCTD4 (Kctd4), found in Mus musculus (Mouse).